Consider the following 100-residue polypeptide: Replication restart protein PriB (100 aa).

Residues 1–100 (MTNRMELSGT…VLHADNITQI (100 aa)) form the SSB domain.

It belongs to the PriB family. In terms of assembly, homodimer. Interacts with PriA and DnaT. Component of the replication restart primosome. Primosome assembly occurs via a 'hand-off' mechanism. PriA binds to replication forks, subsequently PriB then DnaT bind; DnaT then displaces ssDNA to generate the helicase loading substrate.

Functionally, involved in the restart of stalled replication forks, which reloads the replicative helicase on sites other than the origin of replication; the PriA-PriB pathway is the major replication restart pathway. During primosome assembly it facilitates complex formation between PriA and DnaT on DNA; stabilizes PriA on DNA. Stimulates the DNA unwinding activity of PriA helicase. The polypeptide is Replication restart protein PriB (Vibrio parahaemolyticus serotype O3:K6 (strain RIMD 2210633)).